The following is a 344-amino-acid chain: Selenide, water dikinase (344 aa).

The active site involves Cys16. ATP contacts are provided by residues Lys19 and 47-49; that span reads SRD. Asp50 is a Mg(2+) binding site. ATP-binding positions include Asp67, Asp90, and 138 to 140; that span reads GHS. Asp90 lines the Mg(2+) pocket. Asp226 contributes to the Mg(2+) binding site.

This sequence belongs to the selenophosphate synthase 1 family. Class I subfamily. Homodimer. Mg(2+) is required as a cofactor.

It carries out the reaction hydrogenselenide + ATP + H2O = selenophosphate + AMP + phosphate + 2 H(+). Functionally, synthesizes selenophosphate from selenide and ATP. The chain is Selenide, water dikinase from Pseudomonas aeruginosa (strain ATCC 15692 / DSM 22644 / CIP 104116 / JCM 14847 / LMG 12228 / 1C / PRS 101 / PAO1).